The chain runs to 283 residues: Urease accessory protein UreD 1 (283 aa).

This sequence belongs to the UreD family. In terms of assembly, ureD, UreF and UreG form a complex that acts as a GTP-hydrolysis-dependent molecular chaperone, activating the urease apoprotein by helping to assemble the nickel containing metallocenter of UreC. The UreE protein probably delivers the nickel.

It localises to the cytoplasm. Functionally, required for maturation of urease via the functional incorporation of the urease nickel metallocenter. This Brucella anthropi (strain ATCC 49188 / DSM 6882 / CCUG 24695 / JCM 21032 / LMG 3331 / NBRC 15819 / NCTC 12168 / Alc 37) (Ochrobactrum anthropi) protein is Urease accessory protein UreD 1.